A 319-amino-acid polypeptide reads, in one-letter code: Oligopeptide transport system permease protein OppB (319 aa).

The next 6 helical transmembrane spans lie at 9 to 29 (ILLM…FAKL), 99 to 119 (FWMS…MSIV), 137 to 157 (SITF…IFGY), 183 to 203 (IYHM…GIFT), 248 to 268 (FGFV…IFGY), and 289 to 309 (ALIL…DIIM). One can recognise an ABC transmembrane type-1 domain in the interval 95-305 (AINTFWMSLL…FLGLLGALLS (211 aa)).

This sequence belongs to the binding-protein-dependent transport system permease family. OppBC subfamily. As to quaternary structure, the complex is composed of two ATP-binding proteins (OppD and OppF), two transmembrane proteins (OppB and OppC) and a solute-binding protein (OppA).

The protein localises to the cell membrane. Part of the ABC transporter complex OppABCDF involved in the uptake of oligopeptides. Probably responsible for the translocation of the substrate across the membrane. Essential for uptake of peptides larger than three amino acids and for growth in milk. The sequence is that of Oligopeptide transport system permease protein OppB (oppB) from Lactococcus lactis subsp. lactis (strain IL1403) (Streptococcus lactis).